A 230-amino-acid polypeptide reads, in one-letter code: Large ribosomal subunit protein uL1 (230 aa).

This sequence belongs to the universal ribosomal protein uL1 family. Part of the 50S ribosomal subunit.

Its function is as follows. Binds directly to 23S rRNA. The L1 stalk is quite mobile in the ribosome, and is involved in E site tRNA release. Protein L1 is also a translational repressor protein, it controls the translation of the L11 operon by binding to its mRNA. This chain is Large ribosomal subunit protein uL1, found in Caldicellulosiruptor bescii (strain ATCC BAA-1888 / DSM 6725 / KCTC 15123 / Z-1320) (Anaerocellum thermophilum).